A 506-amino-acid polypeptide reads, in one-letter code: GTPase Der (506 aa).

2 consecutive EngA-type G domains span residues P3 to L166 and I218 to T391. Residues G9 to S16, D56 to I60, N118 to D121, G224 to S231, D271 to V275, and N336 to D339 contribute to the GTP site. Residues Q392 to N476 form the KH-like domain.

It belongs to the TRAFAC class TrmE-Era-EngA-EngB-Septin-like GTPase superfamily. EngA (Der) GTPase family. As to quaternary structure, associates with the 50S ribosomal subunit.

GTPase that plays an essential role in the late steps of ribosome biogenesis. The protein is GTPase Der of Actinobacillus pleuropneumoniae serotype 7 (strain AP76).